Here is a 546-residue protein sequence, read N- to C-terminus: Chaperonin GroEL (546 aa).

Residues 30–33 (TLGP), lysine 51, 87–91 (DGTTT), glycine 415, 479–481 (NAA), and aspartate 495 contribute to the ATP site.

It belongs to the chaperonin (HSP60) family. Forms a cylinder of 14 subunits composed of two heptameric rings stacked back-to-back. Interacts with the co-chaperonin GroES.

The protein localises to the cytoplasm. The enzyme catalyses ATP + H2O + a folded polypeptide = ADP + phosphate + an unfolded polypeptide.. In terms of biological role, together with its co-chaperonin GroES, plays an essential role in assisting protein folding. The GroEL-GroES system forms a nano-cage that allows encapsulation of the non-native substrate proteins and provides a physical environment optimized to promote and accelerate protein folding. The protein is Chaperonin GroEL of Pseudomonas entomophila (strain L48).